A 184-amino-acid polypeptide reads, in one-letter code: Ribosome-recycling factor (184 aa).

The protein belongs to the RRF family.

The protein resides in the cytoplasm. In terms of biological role, responsible for the release of ribosomes from messenger RNA at the termination of protein biosynthesis. May increase the efficiency of translation by recycling ribosomes from one round of translation to another. This is Ribosome-recycling factor from Stenotrophomonas maltophilia (strain K279a).